Consider the following 86-residue polypeptide: RNA-binding protein Hfq (86 aa).

Residues 10–71 enclose the Sm domain; sequence DLFLNNARKE…VSTIQPGKYI (62 aa).

Belongs to the Hfq family. In terms of assembly, homohexamer.

In terms of biological role, RNA chaperone that binds small regulatory RNA (sRNAs) and mRNAs to facilitate mRNA translational regulation in response to envelope stress, environmental stress and changes in metabolite concentrations. Also binds with high specificity to tRNAs. The polypeptide is RNA-binding protein Hfq (Clostridioides difficile (strain 630) (Peptoclostridium difficile)).